Here is a 151-residue protein sequence, read N- to C-terminus: UPF0178 protein RD1_0321 (151 aa).

Belongs to the UPF0178 family.

This chain is UPF0178 protein RD1_0321, found in Roseobacter denitrificans (strain ATCC 33942 / OCh 114) (Erythrobacter sp. (strain OCh 114)).